The primary structure comprises 278 residues: Adenosylcobinamide-GDP ribazoletransferase (278 aa).

Transmembrane regions (helical) follow at residues 35–55 (VVGI…NFIL), 62–82 (AVLP…TGAL), 116–136 (GALA…SLTI), 141–161 (AAVY…VVSC), 185–205 (LIVA…MPFI), 222–242 (LIIV…SKLI), and 257–277 (LLEI…TFFI).

Belongs to the CobS family. The cofactor is Mg(2+).

Its subcellular location is the cell inner membrane. It carries out the reaction alpha-ribazole + adenosylcob(III)inamide-GDP = adenosylcob(III)alamin + GMP + H(+). The catalysed reaction is alpha-ribazole 5'-phosphate + adenosylcob(III)inamide-GDP = adenosylcob(III)alamin 5'-phosphate + GMP + H(+). Its pathway is cofactor biosynthesis; adenosylcobalamin biosynthesis; adenosylcobalamin from cob(II)yrinate a,c-diamide: step 7/7. Its function is as follows. Joins adenosylcobinamide-GDP and alpha-ribazole to generate adenosylcobalamin (Ado-cobalamin). Also synthesizes adenosylcobalamin 5'-phosphate from adenosylcobinamide-GDP and alpha-ribazole 5'-phosphate. The protein is Adenosylcobinamide-GDP ribazoletransferase of Fusobacterium nucleatum subsp. nucleatum (strain ATCC 25586 / DSM 15643 / BCRC 10681 / CIP 101130 / JCM 8532 / KCTC 2640 / LMG 13131 / VPI 4355).